Reading from the N-terminus, the 414-residue chain is Tryptophan synthase beta chain (414 aa).

The segment covering 1–12 (MVSTISRHDQNK) has biased composition (basic and acidic residues). The interval 1 to 23 (MVSTISRHDQNKNNDYLNQPSKE) is disordered. Residue Lys109 is modified to N6-(pyridoxal phosphate)lysine.

It belongs to the TrpB family. Tetramer of two alpha and two beta chains. It depends on pyridoxal 5'-phosphate as a cofactor.

The enzyme catalyses (1S,2R)-1-C-(indol-3-yl)glycerol 3-phosphate + L-serine = D-glyceraldehyde 3-phosphate + L-tryptophan + H2O. It functions in the pathway amino-acid biosynthesis; L-tryptophan biosynthesis; L-tryptophan from chorismate: step 5/5. The beta subunit is responsible for the synthesis of L-tryptophan from indole and L-serine. In Prochlorococcus marinus (strain MIT 9515), this protein is Tryptophan synthase beta chain.